A 428-amino-acid chain; its full sequence is Glutamate-1-semialdehyde 2,1-aminomutase (428 aa).

Residue K265 is modified to N6-(pyridoxal phosphate)lysine.

The protein belongs to the class-III pyridoxal-phosphate-dependent aminotransferase family. HemL subfamily. As to quaternary structure, homodimer. It depends on pyridoxal 5'-phosphate as a cofactor.

Its subcellular location is the cytoplasm. It catalyses the reaction (S)-4-amino-5-oxopentanoate = 5-aminolevulinate. The protein operates within porphyrin-containing compound metabolism; protoporphyrin-IX biosynthesis; 5-aminolevulinate from L-glutamyl-tRNA(Glu): step 2/2. This Hamiltonella defensa subsp. Acyrthosiphon pisum (strain 5AT) protein is Glutamate-1-semialdehyde 2,1-aminomutase.